The chain runs to 603 residues: Adenine deaminase (603 aa).

The protein belongs to the metallo-dependent hydrolases superfamily. Adenine deaminase family. Homodimer. The cofactor is Mn(2+).

The catalysed reaction is adenine + H2O + H(+) = hypoxanthine + NH4(+). The polypeptide is Adenine deaminase (Klebsiella pneumoniae subsp. pneumoniae (strain ATCC 700721 / MGH 78578)).